The following is a 149-amino-acid chain: Flavodoxin YqcA (149 aa).

The 142-residue stretch at 4-145 (IGIFVGTMYG…ESNPWVEQWG (142 aa)) folds into the Flavodoxin-like domain. Residues 10–15 (TMYGNS) and 99–101 (NFC) each bind FMN.

This sequence belongs to the flavodoxin family. MioC subfamily. As to quaternary structure, monomer. Requires FMN as cofactor.

Functionally, probable electron transporter. The sequence is that of Flavodoxin YqcA (yqcA) from Escherichia coli (strain K12).